Consider the following 354-residue polypeptide: NADH-quinone oxidoreductase subunit H (354 aa).

A run of 8 helical transmembrane segments spans residues 25–45 (LVRI…LILW), 91–111 (WIYM…WAVI), 126–146 (LLYA…AGWA), 170–190 (MGFA…SGIV), 205–225 (FLSW…ISGI), 267–287 (IVIS…PFGF), 290–310 (FIPG…VFIW), and 330–350 (IFIP…MSPL).

The protein belongs to the complex I subunit 1 family. As to quaternary structure, NDH-1 is composed of 14 different subunits. Subunits NuoA, H, J, K, L, M, N constitute the membrane sector of the complex.

The protein resides in the cell inner membrane. The catalysed reaction is a quinone + NADH + 5 H(+)(in) = a quinol + NAD(+) + 4 H(+)(out). NDH-1 shuttles electrons from NADH, via FMN and iron-sulfur (Fe-S) centers, to quinones in the respiratory chain. The immediate electron acceptor for the enzyme in this species is believed to be ubiquinone. Couples the redox reaction to proton translocation (for every two electrons transferred, four hydrogen ions are translocated across the cytoplasmic membrane), and thus conserves the redox energy in a proton gradient. This subunit may bind ubiquinone. The chain is NADH-quinone oxidoreductase subunit H from Paraburkholderia xenovorans (strain LB400).